A 397-amino-acid chain; its full sequence is DnaJ homolog subfamily A member 4 (397 aa).

Residues 4-70 (ETQYYDILGV…RDIYDQGGEQ (67 aa)) form the J domain. S18 bears the Phosphoserine mark. Residues 122 to 206 (GITKKLALQK…CSGAKVTREK (85 aa)) form a CR-type zinc finger. The Zn(2+) site is built by C135, C138, C151, C154, C178, C181, C194, and C197. CXXCXGXG motif repeat units follow at residues 135 to 142 (CEKCEGIG), 151 to 158 (CPLCKGRG), 178 to 185 (CIECKGQG), and 194 to 201 (CENCSGAK). The segment covering 366 to 380 (EFNPNEQSWRQHREA) has biased composition (basic and acidic residues). The disordered stretch occupies residues 366-397 (EFNPNEQSWRQHREAYEEDDEEPRAGVQCQTA). C394 is modified (cysteine methyl ester). C394 carries the S-farnesyl cysteine lipid modification. Positions 395–397 (QTA) are cleaved as a propeptide — removed in mature form.

Specifically expressed in testis and heart.

It is found in the membrane. This chain is DnaJ homolog subfamily A member 4 (Dnaja4), found in Mus musculus (Mouse).